The primary structure comprises 460 residues: GTPase Der (460 aa).

EngA-type G domains follow at residues 3 to 167 (FTFA…PEPD) and 189 to 364 (IRVA…ATWN). Residues 9–16 (GRPNVGKS), 56–60 (DTAGL), 119–122 (NKSE), 195–202 (GRPNAGKS), 242–246 (DTAGL), and 307–310 (NKWD) contribute to the GTP site. The region spanning 365–449 (RRVPTAALNR…PVRIMLREKA (85 aa)) is the KH-like domain.

It belongs to the TRAFAC class TrmE-Era-EngA-EngB-Septin-like GTPase superfamily. EngA (Der) GTPase family. Associates with the 50S ribosomal subunit.

GTPase that plays an essential role in the late steps of ribosome biogenesis. This chain is GTPase Der, found in Rhodopseudomonas palustris (strain BisA53).